Here is a 118-residue protein sequence, read N- to C-terminus: Protein RALF-like 24 (118 aa).

The signal sequence occupies residues 1 to 22 (MSRSLALVYLSLLCLQTHLSIS). A propeptide spans 23-63 (VTVPIPSVNGEIDAMLNRNGVIGEEEGEEMMPSEISRRVMM) (removed in mature form). Cystine bridges form between C81/C91 and C103/C109.

The protein belongs to the plant rapid alkalinization factor (RALF) family. Post-translationally, proteolytically cleaved, probably by S1P, a subtilisin-like serine protease (subtilase).

The protein localises to the secreted. Its function is as follows. Cell signaling peptide that may regulate plant stress, growth, and development. Mediates a rapid alkalinization of extracellular space by mediating a transient increase in the cytoplasmic Ca(2+) concentration leading to a calcium-dependent signaling events through a cell surface receptor and a concomitant activation of some intracellular mitogen-activated protein kinases. This Arabidopsis thaliana (Mouse-ear cress) protein is Protein RALF-like 24 (RALFL24).